The following is a 323-amino-acid chain: Coiled-coil domain-containing protein 160 (323 aa).

Positions S143–S290 form a coiled coil.

It belongs to the CCDC160 family.

The chain is Coiled-coil domain-containing protein 160 (CCDC160) from Bos taurus (Bovine).